We begin with the raw amino-acid sequence, 148 residues long: Large ribosomal subunit protein uL15 (148 aa).

Residues 1-12 (MSEPIKLHDLRP) show a composition bias toward basic and acidic residues. The interval 1-52 (MSEPIKLHDLRPAKGANKPKTRVGRGEASKGKTAGRGTKGTKARKQVSAAFE) is disordered.

This sequence belongs to the universal ribosomal protein uL15 family. Part of the 50S ribosomal subunit.

In terms of biological role, binds to the 23S rRNA. This is Large ribosomal subunit protein uL15 from Corynebacterium diphtheriae (strain ATCC 700971 / NCTC 13129 / Biotype gravis).